The chain runs to 592 residues: Ichor (592 aa).

Residues 114 to 123 (NNNYMQSAYH) show a composition bias toward polar residues. 4 disordered regions span residues 114-156 (NNNY…VSSS), 343-377 (LQNR…QAPT), 416-439 (LSNP…MQAS), and 459-527 (HTTT…DLSG). Over residues 124 to 148 (PQNQSNPTSTTQSNGGSNSNSNNSN) the composition is skewed to low complexity. The span at 356 to 369 (SSGGGGGANQGAGI) shows a compositional bias: gly residues. Positions 459 to 469 (HTTTASTTGSE) are enriched in polar residues. A compositionally biased stretch (low complexity) spans 488-500 (QQQQQQQQQQQQQ). Residues 507 to 524 (PTTPQMSAISPSGFSASD) show a composition bias toward polar residues. C2H2-type zinc fingers lie at residues 536–558 (HRCS…LRTH) and 564–586 (FRCD…QQIH).

The protein localises to the nucleus. In terms of biological role, transcriptional activator. In tracheal terminal cells, regulates the transcription of factors involved in the formation of a mature apical extracellular matrix (aECM) which is essential for the integrity and shape of seamless tubes. This Drosophila melanogaster (Fruit fly) protein is Ichor.